A 107-amino-acid polypeptide reads, in one-letter code: MDQFQHISVVDAQEKLKQQDLNAVLVDIRDPQSFIRGHVENAFHLTNDTIVELMNEVDFEQPVLVMCYHGHSSQGAAQYLVNQGYEEVYSVDGGFEGWHKAGLPVEK.

A Rhodanese domain is found at 19-107 (QDLNAVLVDI…WHKAGLPVEK (89 aa)). Cys-67 functions as the Cysteine persulfide intermediate in the catalytic mechanism.

The protein belongs to the GlpE family.

The protein resides in the cytoplasm. It catalyses the reaction thiosulfate + hydrogen cyanide = thiocyanate + sulfite + 2 H(+). The catalysed reaction is thiosulfate + [thioredoxin]-dithiol = [thioredoxin]-disulfide + hydrogen sulfide + sulfite + 2 H(+). Transferase that catalyzes the transfer of sulfur from thiosulfate to thiophilic acceptors such as cyanide or dithiols. May function in a CysM-independent thiosulfate assimilation pathway by catalyzing the conversion of thiosulfate to sulfite, which can then be used for L-cysteine biosynthesis. This is Thiosulfate sulfurtransferase GlpE from Aliivibrio fischeri (strain MJ11) (Vibrio fischeri).